The sequence spans 139 residues: Endoribonuclease YbeY (139 aa).

The Zn(2+) site is built by His99, His103, and His109.

The protein belongs to the endoribonuclease YbeY family. It depends on Zn(2+) as a cofactor.

The protein resides in the cytoplasm. Its function is as follows. Single strand-specific metallo-endoribonuclease involved in late-stage 70S ribosome quality control and in maturation of the 3' terminus of the 16S rRNA. This is Endoribonuclease YbeY from Sulfurimonas denitrificans (strain ATCC 33889 / DSM 1251) (Thiomicrospira denitrificans (strain ATCC 33889 / DSM 1251)).